Consider the following 199-residue polypeptide: V-type ATP synthase subunit E (199 aa).

It belongs to the V-ATPase E subunit family.

Produces ATP from ADP in the presence of a proton gradient across the membrane. The chain is V-type ATP synthase subunit E (atpE) from Borreliella burgdorferi (strain ATCC 35210 / DSM 4680 / CIP 102532 / B31) (Borrelia burgdorferi).